The chain runs to 317 residues: Transaldolase (317 aa).

The active-site Schiff-base intermediate with substrate is the lysine 132.

It belongs to the transaldolase family. Type 1 subfamily.

The protein localises to the cytoplasm. It catalyses the reaction D-sedoheptulose 7-phosphate + D-glyceraldehyde 3-phosphate = D-erythrose 4-phosphate + beta-D-fructose 6-phosphate. Its pathway is carbohydrate degradation; pentose phosphate pathway; D-glyceraldehyde 3-phosphate and beta-D-fructose 6-phosphate from D-ribose 5-phosphate and D-xylulose 5-phosphate (non-oxidative stage): step 2/3. Its function is as follows. Transaldolase is important for the balance of metabolites in the pentose-phosphate pathway. This is Transaldolase from Haemophilus influenzae (strain ATCC 51907 / DSM 11121 / KW20 / Rd).